A 426-amino-acid chain; its full sequence is Trigger factor (426 aa).

Residues 166–249 (GDIVTFDFKG…IIEVKARELP (84 aa)) enclose the PPIase FKBP-type domain.

Belongs to the FKBP-type PPIase family. Tig subfamily.

It localises to the cytoplasm. The catalysed reaction is [protein]-peptidylproline (omega=180) = [protein]-peptidylproline (omega=0). In terms of biological role, involved in protein export. Acts as a chaperone by maintaining the newly synthesized protein in an open conformation. Functions as a peptidyl-prolyl cis-trans isomerase. The protein is Trigger factor of Mesoplasma florum (strain ATCC 33453 / NBRC 100688 / NCTC 11704 / L1) (Acholeplasma florum).